A 59-amino-acid polypeptide reads, in one-letter code: Large ribosomal subunit protein bL32 (59 aa).

The segment covering 1–15 (MAVPKKKTSKSKRDM) has biased composition (basic residues). The segment at 1–26 (MAVPKKKTSKSKRDMRRATWNRKAAA) is disordered.

It belongs to the bacterial ribosomal protein bL32 family.

This chain is Large ribosomal subunit protein bL32, found in Cyanothece sp. (strain PCC 7425 / ATCC 29141).